A 555-amino-acid polypeptide reads, in one-letter code: MAKFVFVTGGVVSSIGKGIVAASLGRLLKSKGYSVSILKLDPYLNVDPGTMSPFQHGEVFVTEDGAETDLDLGHYERFTDTAMSRLNSVTTGSIYQAVINKERRGDYDGRTVQVIPHITREIRERIKRVANNSGADVVISEIGGTVGDIESLPFLEAIREFKGDVKRNDVVYVHVTLLPYIGTSGEIKTKPTQHSVKELRSIGIQPDILVCRSDRPINDELKNKIGGFCGVNSEAVIASLDADSIYSVPLALKDEGLCKEVLDCLDLNDHESDLKDWERLVHKLRNPGPSVKVALVGKYVQLNDAYLSVVEALRHACISHDASLDLHWINAENIESEGAEKLLQGMDAIVVPGGFGNRGVNGKIAAIRWAREQRVPFLGLCLGMQCAVIEWARNIAGLEDASSAELNPNSKHPVIHLLPEQQDVVDLGGTMRLGVYPCRLQANTTGQSLYNEEVVYERHRHRYEFNNSYRTLLMESGYVISGTSPDGRLVELIELKNHPFFIACQYHPEFLSRPGKPHPLFGGLIQAAQIRVPSSPSEAFNPQSKIIEKKSLEQQ.

Residues 1–267 form an amidoligase domain region; that stretch reads MAKFVFVTGG…CKEVLDCLDL (267 aa). Ser-13 contributes to the CTP binding site. Residue Ser-13 coordinates UTP. ATP is bound by residues 14–19 and Asp-71; that span reads SIGKGI. Mg(2+) is bound by residues Asp-71 and Glu-141. CTP contacts are provided by residues 148-150, 188-193, and Lys-224; these read DIE and KTKPTQ. UTP contacts are provided by residues 188–193 and Lys-224; that span reads KTKPTQ. Positions 292-534 constitute a Glutamine amidotransferase type-1 domain; it reads KVALVGKYVQ…IQAAQIRVPS (243 aa). Residue Gly-354 participates in L-glutamine binding. The active-site Nucleophile; for glutamine hydrolysis is Cys-381. L-glutamine-binding positions include 382-385, Glu-405, and Arg-462; that span reads LGMQ. Catalysis depends on residues His-507 and Glu-509. The interval 536-555 is disordered; sequence PSEAFNPQSKIIEKKSLEQQ. The span at 546–555 shows a compositional bias: basic and acidic residues; the sequence is IIEKKSLEQQ.

It belongs to the CTP synthase family. In terms of assembly, homotetramer.

The enzyme catalyses UTP + L-glutamine + ATP + H2O = CTP + L-glutamate + ADP + phosphate + 2 H(+). The catalysed reaction is L-glutamine + H2O = L-glutamate + NH4(+). It catalyses the reaction UTP + NH4(+) + ATP = CTP + ADP + phosphate + 2 H(+). The protein operates within pyrimidine metabolism; CTP biosynthesis via de novo pathway; CTP from UDP: step 2/2. With respect to regulation, allosterically activated by GTP, when glutamine is the substrate; GTP has no effect on the reaction when ammonia is the substrate. The allosteric effector GTP functions by stabilizing the protein conformation that binds the tetrahedral intermediate(s) formed during glutamine hydrolysis. Inhibited by the product CTP, via allosteric rather than competitive inhibition. In terms of biological role, catalyzes the ATP-dependent amination of UTP to CTP with either L-glutamine or ammonia as the source of nitrogen. Regulates intracellular CTP levels through interactions with the four ribonucleotide triphosphates. This is CTP synthase from Prochlorococcus marinus (strain NATL1A).